The primary structure comprises 1236 residues: Complement factor H (1236 aa).

A signal peptide spans 1–18; the sequence is MRFPAKIVWLVLWTVCVA. 20 Sushi domains span residues 19 to 82, 83 to 143, 144 to 207, 208 to 264, 265 to 322, 325 to 383, 385 to 442, 444 to 505, 507 to 562, 565 to 623, 627 to 685, 688 to 745, 750 to 804, 809 to 866, 868 to 936, 937 to 994, 995 to 1053, 1054 to 1111, 1114 to 1172, and 1173 to 1235; these read EDCK…ICRK, KPCA…ICEV, VKCL…KCVE, IFCK…TCIE, ITCD…RCAW, CSYP…EEPC, RQCI…RCIR, KTCS…VCIK, CDRP…KAAC, RECS…TCKV, KSCA…VCIE, RTCG…QCIA, RKCK…DCNE, QLCP…RCIE, IGCS…QCVG, LPCG…DCIS, TNCV…ACRD, VSCG…QCKD, GKCG…KCLE, and ACVI…YPRC. Intrachain disulfides connect C21–C66, C52–C80, C85–C129, C114–C141, C146–C192, C178–C205, C210–C251, C237–C262, C267–C309, C294–C320, C325–C372, C355–C383, C387–C429, C414–C440, C446–C492, C475–C503, C507–C551, C534–C562, C567–C609, C595–C621, C629–C672, C658–C683, C690–C732, C718–C743, C752–C791, C780–C802, C811–C853, C839–C864, C870–C923, C909–C934, C939–C981, C967–C992, C997–C1040, C1026–C1051, C1056–C1098, C1084–C1109, C1116–C1159, C1145–C1170, C1174–C1225, and C1208–C1235. A sulfotyrosine mark is found at Y168 and Y170. Y465 and Y473 each carry sulfotyrosine. Residues Y575, Y579, and Y585 each carry the sulfotyrosine modification. An N-linked (GlcNAc...) asparagine glycan is attached at N775. N-linked (GlcNAc...) asparagine glycosylation is present at N1100.

Homodimer. Also forms homooligomers. Interacts with complement protein C3b; this interaction inhibits complement activation. Interacts with complement protein C3d. Interacts with CR3/ITGAM; this interaction mediates adhesion of neutrophils to pathogens leading to pathogen clearance. Post-translationally, sulfated on tyrosine residues. CFH is one of the most abundant complement components in blood where the liver is the major source of CFH protein in vivo. in addition, CFH is secreted by additional cell types including monocytes, fibroblasts, or endothelial cells.

The protein localises to the secreted. Functionally, glycoprotein that plays an essential role in maintaining a well-balanced immune response by modulating complement activation. Acts as a soluble inhibitor of complement, where its binding to self markers such as glycan structures prevents complement activation and amplification on cell surfaces. Accelerates the decay of the complement alternative pathway (AP) C3 convertase C3bBb, thus preventing local formation of more C3b, the central player of the complement amplification loop. As a cofactor of the serine protease factor I, CFH also regulates proteolytic degradation of already-deposited C3b. In addition, mediates several cellular responses through interaction with specific receptors. For example, interacts with CR3/ITGAM receptor and thereby mediates the adhesion of human neutrophils to different pathogens. In turn, these pathogens are phagocytosed and destroyed. This chain is Complement factor H (CFH), found in Bos taurus (Bovine).